Here is a 677-residue protein sequence, read N- to C-terminus: Methionine--tRNA ligase (677 aa).

Residues 15–25 (PYANGSIHLGH) carry the 'HIGH' region motif. 4 residues coordinate Zn(2+): Cys-146, Cys-149, Cys-159, and Cys-162. A 'KMSKS' region motif is present at residues 333-337 (KMSKS). Residue Lys-336 participates in ATP binding. The region spanning 575–677 (DFAKIDLRVA…DGAKPGQQVK (103 aa)) is the tRNA-binding domain.

The protein belongs to the class-I aminoacyl-tRNA synthetase family. MetG type 1 subfamily. In terms of assembly, homodimer. Requires Zn(2+) as cofactor.

It is found in the cytoplasm. It catalyses the reaction tRNA(Met) + L-methionine + ATP = L-methionyl-tRNA(Met) + AMP + diphosphate. Its function is as follows. Is required not only for elongation of protein synthesis but also for the initiation of all mRNA translation through initiator tRNA(fMet) aminoacylation. This Salmonella typhimurium (strain LT2 / SGSC1412 / ATCC 700720) protein is Methionine--tRNA ligase.